The primary structure comprises 503 residues: Probable cytosol aminopeptidase (503 aa).

The Mn(2+) site is built by K268 and D273. K280 is an active-site residue. D291, D350, and E352 together coordinate Mn(2+). R354 is an active-site residue.

The protein belongs to the peptidase M17 family. Mn(2+) is required as a cofactor.

Its subcellular location is the cytoplasm. The enzyme catalyses Release of an N-terminal amino acid, Xaa-|-Yaa-, in which Xaa is preferably Leu, but may be other amino acids including Pro although not Arg or Lys, and Yaa may be Pro. Amino acid amides and methyl esters are also readily hydrolyzed, but rates on arylamides are exceedingly low.. It catalyses the reaction Release of an N-terminal amino acid, preferentially leucine, but not glutamic or aspartic acids.. Presumably involved in the processing and regular turnover of intracellular proteins. Catalyzes the removal of unsubstituted N-terminal amino acids from various peptides. This Nocardia farcinica (strain IFM 10152) protein is Probable cytosol aminopeptidase.